The following is a 1377-amino-acid chain: Neogenin (1377 aa).

The signal sequence occupies residues 1–2 (AA). Topologically, residues 3–1074 (AKNGSPPQSA…PTSPLDSNML (1072 aa)) are extracellular. Ig-like C2-type domains lie at 21-114 (PLYF…RTAK), 121-206 (PRFT…EAEL), 198-305 (PKFS…AELT), and 310-395 (PEFL…AQLI). N-linked (GlcNAc...) asparagine glycosylation occurs at asparagine 42. 3 disulfides stabilise this stretch: cysteine 43-cysteine 98, cysteine 142-cysteine 190, and cysteine 239-cysteine 289. N-linked (GlcNAc...) asparagine glycosylation is present at asparagine 179. Residue asparagine 295 is glycosylated (N-linked (GlcNAc...) asparagine). Cysteine 331 and cysteine 379 form a disulfide bridge. Fibronectin type-III domains follow at residues 410–504 (APRD…TQPE), 510–600 (PAPN…TLSD), 605–700 (APQN…TFES), 710–800 (VPSS…RPHT), 825–924 (PPVG…LVPT), and 926–1023 (PPKD…TPKA). 2 N-linked (GlcNAc...) asparagine glycosylation sites follow: asparagine 439 and asparagine 458. Asparagine 608 and asparagine 684 each carry an N-linked (GlcNAc...) asparagine glycan. N-linked (GlcNAc...) asparagine glycosylation is present at asparagine 878. Residues 1010–1066 (GPMSEAVQFRTPKADSSDKMPNDQALGSAGKGGRLPDLGSDYKPPMSGSNSPHGSPT) are disordered. Over residues 1021-1030 (PKADSSDKMP) the composition is skewed to basic and acidic residues. Residues 1056–1066 (SGSNSPHGSPT) show a composition bias toward polar residues. The chain crosses the membrane as a helical span at residues 1075-1095 (LVIIVSIGVITIVVVVIIAVF). At 1096–1377 (CTRRTTSHQK…MKDLNAITTA (282 aa)) the chain is on the cytoplasmic side. Residues 1143–1281 (PIDKSPDPNP…SHPLKSFAVP (139 aa)) are disordered. 2 positions are modified to phosphoserine: serine 1147 and serine 1163. Polar residues-rich tracts occupy residues 1160–1176 (PRNSQDITPVDNSMDSN), 1213–1238 (QPPQQSVRNTPSTDTMPASSSQTCCT), and 1246–1265 (ATSSSYLASSQEEDSGQSLP). Residue threonine 1167 is modified to Phosphothreonine. Serine 1317 carries the phosphoserine modification. The residue at position 1320 (threonine 1320) is a Phosphothreonine. Phosphoserine is present on residues serine 1348, serine 1350, and serine 1351.

It belongs to the immunoglobulin superfamily. DCC family. Interacts with MYO10. Interacts with RGMA and RGMB. Interacts with BMP2, BMP4, BMP6, and BMP7.

The protein localises to the cell membrane. Its function is as follows. Multi-functional cell surface receptor regulating cell adhesion in many diverse developmental processes, including neural tube and mammary gland formation, myogenesis and angiogenesis. Receptor for members of the BMP, netrin, and repulsive guidance molecule (RGM) families. Netrin-Neogenin interactions result in a chemoattractive axon guidance response and cell-cell adhesion, the interaction between NEO1/Neogenin and RGMa and RGMb induces a chemorepulsive response. In Rattus norvegicus (Rat), this protein is Neogenin (Neo1).